The chain runs to 233 residues: Zinc import ATP-binding protein ZnuC (233 aa).

An ABC transporter domain is found at 6-222; the sequence is IEFRNVSKKF…SEFSNALSSL (217 aa). ATP is bound at residue 38-45; sequence GPNGAGKT.

It belongs to the ABC transporter superfamily. Zinc importer (TC 3.A.1.15.5) family. In terms of assembly, the complex is composed of two ATP-binding proteins (ZnuC), two transmembrane proteins (ZnuB) and a solute-binding protein (ZnuA).

The protein localises to the cell inner membrane. The enzyme catalyses Zn(2+)(out) + ATP(in) + H2O(in) = Zn(2+)(in) + ADP(in) + phosphate(in) + H(+)(in). In terms of biological role, part of the ABC transporter complex ZnuABC involved in zinc import. Responsible for energy coupling to the transport system. The polypeptide is Zinc import ATP-binding protein ZnuC (Rickettsia prowazekii (strain Madrid E)).